A 209-amino-acid polypeptide reads, in one-letter code: Putative cardiolipin synthase (209 aa).

Helical transmembrane passes span 27 to 47, 82 to 102, 126 to 146, and 157 to 177; these read AFVYVVLSAHANGWGVAILVF, VTVPIVFGLSGIVPWWFVLTL, VTYVGKAATFGFMVGFPTILL, and LLACGWAFLIWGMYAYLWAFV.

The protein belongs to the CDP-alcohol phosphatidyltransferase class-I family.

Its subcellular location is the cell membrane. The enzyme catalyses a CDP-1,2-diacyl-sn-glycerol + a 1,2-diacyl-sn-glycero-3-phospho-(1'-sn-glycerol) = a cardiolipin + CMP + H(+). It functions in the pathway lipid metabolism; phospholipid metabolism. Its function is as follows. May catalyze the biosynthesis of cardiolipin from phosphatidylglycerol (PG) and CDP-diacylglycerol. The polypeptide is Putative cardiolipin synthase (Mycobacterium bovis (strain ATCC BAA-935 / AF2122/97)).